Reading from the N-terminus, the 658-residue chain is DNA mismatch repair protein MutL (658 aa).

Residues 114–130 show a composition bias toward basic and acidic residues; it reads RQEDSSHATQVKAEDGK. Disordered stretches follow at residues 114–137, 369–401, and 438–457; these read RQED…PTAA, DYPT…APQQ, and FGNM…LSDG.

This sequence belongs to the DNA mismatch repair MutL/HexB family.

This protein is involved in the repair of mismatches in DNA. It is required for dam-dependent methyl-directed DNA mismatch repair. May act as a 'molecular matchmaker', a protein that promotes the formation of a stable complex between two or more DNA-binding proteins in an ATP-dependent manner without itself being part of a final effector complex. In Neisseria meningitidis serogroup A / serotype 4A (strain DSM 15465 / Z2491), this protein is DNA mismatch repair protein MutL.